A 461-amino-acid chain; its full sequence is PTS system sucrose-specific EIIBC component (461 aa).

One can recognise a PTS EIIB type-1 domain in the interval Lys-4–Glu-87. Cys-26 functions as the Phosphocysteine intermediate; for EIIB activity in the catalytic mechanism. The region spanning Lys-107 to Lys-461 is the PTS EIIC type-1 domain. 10 helical membrane passes run Ile-112–Met-132, Leu-148–Ala-168, Leu-178–Ala-198, Phe-208–Val-228, Leu-248–Gly-268, Ala-289–Val-309, Leu-329–Phe-349, Ile-359–Val-379, Phe-387–Ala-407, and Leu-430–Val-450.

It is found in the cell membrane. It catalyses the reaction N(pros)-phospho-L-histidyl-[protein](out) + sucrose = sucrose 6(G)-phosphate(in) + L-histidyl-[protein]. The phosphoenolpyruvate-dependent sugar phosphotransferase system (sugar PTS), a major carbohydrate active transport system, catalyzes the phosphorylation of incoming sugar substrates concomitantly with their translocation across the cell membrane. This system is involved in sucrose transport. This is PTS system sucrose-specific EIIBC component (sacP) from Bacillus subtilis (strain 168).